A 101-amino-acid chain; its full sequence is Large ribosomal subunit protein bL21 (101 aa).

It belongs to the bacterial ribosomal protein bL21 family. Part of the 50S ribosomal subunit. Contacts protein L20.

This protein binds to 23S rRNA in the presence of protein L20. In Beutenbergia cavernae (strain ATCC BAA-8 / DSM 12333 / CCUG 43141 / JCM 11478 / NBRC 16432 / NCIMB 13614 / HKI 0122), this protein is Large ribosomal subunit protein bL21.